Reading from the N-terminus, the 212-residue chain is Nucleoside diphosphate kinase homolog 5 (212 aa).

Residues 13–145 (EKTLAIIKPD…EREIRFMFPE (133 aa)) form an NDK region.

Belongs to the NDK family. In terms of assembly, component of the axonemal radial spoke complex 1 (RS1), at least composed of spoke head proteins RSPH1, RSPH3, RSPH9 and the cilia-specific component RSPH4A or sperm-specific component RSPH6A, spoke stalk proteins RSPH14, DNAJB13, DYDC1, ROPN1L and NME5, and the anchor protein IQUB. Interacts with IQUB. In terms of tissue distribution, specifically expressed in testis germinal cells.

Its subcellular location is the cell projection. The protein localises to the cilium. It localises to the cytoplasm. It is found in the cytoskeleton. The protein resides in the flagellum axoneme. In terms of biological role, functions as part of axonemal radial spoke complexes that play an important part in the motility of sperm and cilia. Does not seem to have nucleoside diphosphate kinase (NDPK) activity. Confers protection from cell death by BAX and alters the cellular levels of several antioxidant enzymes including GPX5. May play a role in spermiogenesis by increasing the ability of late-stage spermatids to eliminate reactive oxygen species. Exhibits a 3'-5' exonuclease activity with a preference for single-stranded DNA, suggesting roles in DNA proofreading and repair. The polypeptide is Nucleoside diphosphate kinase homolog 5 (Homo sapiens (Human)).